Consider the following 489-residue polypeptide: uncharacterized protein (489 aa).

A 2Fe-2S ferredoxin-type domain is found at 2 to 84; sequence IKITVKRFNG…GMIIEPLRGF (83 aa). The [2Fe-2S] cluster site is built by C48, C53, C56, and C68. 4Fe-4S ferredoxin-type domains are found at residues 123 to 155 and 177 to 205; these read KYVEENKELRGCIDCLSCLSVCPAREVSDYPGP and TAYFENIYNCTTCAKCVEVCPKEIDIVHR. Residues C134, C137, C140, C144, C186, C189, C192, and C196 each contribute to the [4Fe-4S] cluster site.

It belongs to the succinate dehydrogenase/fumarate reductase iron-sulfur protein family.

This is an uncharacterized protein from Methanocaldococcus jannaschii (strain ATCC 43067 / DSM 2661 / JAL-1 / JCM 10045 / NBRC 100440) (Methanococcus jannaschii).